The sequence spans 163 residues: Cyanate hydratase (163 aa).

Active-site residues include R103, E106, and S129.

This sequence belongs to the cyanase family.

The enzyme catalyses cyanate + hydrogencarbonate + 3 H(+) = NH4(+) + 2 CO2. Its function is as follows. Catalyzes the reaction of cyanate with bicarbonate to produce ammonia and carbon dioxide. In Paracoccidioides brasiliensis (strain Pb18), this protein is Cyanate hydratase.